Here is a 417-residue protein sequence, read N- to C-terminus: Phosphoglycerate kinase 2 (417 aa).

Serine 4 carries the phosphoserine modification. Lysine 11 bears the N6-acetyllysine mark. (2R)-3-phosphoglycerate-binding residues include valine 23, aspartate 24, phenylalanine 25, asparagine 26, glutamine 38, and arginine 39. Lysine 48 is subject to N6-acetyllysine. 4 residues coordinate (2R)-3-phosphoglycerate: serine 62, histidine 63, glycine 65, and arginine 66. N6-acetyllysine occurs at positions 75, 86, and 97. (2R)-3-phosphoglycerate is bound by residues leucine 122 and arginine 123. An N6-acetyllysine mark is found at lysine 131 and lysine 146. (2R)-3-phosphoglycerate-binding residues include histidine 170 and arginine 171. The residue at position 196 (tyrosine 196) is a Phosphotyrosine. Lysine 199 carries the post-translational modification N6-acetyllysine. Position 214 (glycine 214) interacts with ADP. A CDP-binding site is contributed by glycine 214. Positions 215 and 216 each coordinate AMP. Residue alanine 215 participates in ATP binding. Alanine 215 is a binding site for Mg(2+). Aspartate 219 contributes to the CDP binding site. Aspartate 219 is a Mg(2+) binding site. Lysine 220 is an AMP binding site. Position 220 (lysine 220) interacts with ATP. Glycine 238 contributes to the ADP binding site. Glycine 238 lines the CDP pocket. Residue glycine 239 participates in AMP binding. Glycine 239 is a binding site for ATP. An N6-acetyllysine mark is found at lysine 267 and lysine 291. Glycine 313 serves as a coordination point for AMP. Glycine 313 is an ATP binding site. Glycine 338, isoleucine 340, and phenylalanine 343 together coordinate CDP. Phenylalanine 343 lines the ADP pocket. Glutamate 344 contacts AMP. ATP contacts are provided by glutamate 344, aspartate 375, and threonine 376. Aspartate 375 is a Mg(2+) binding site.

The protein belongs to the phosphoglycerate kinase family. As to quaternary structure, monomer. Requires Mg(2+) as cofactor. As to expression, testis and sperm. Localized on the principle piece in the sperm (at protein level). Testis-specific.

It localises to the cytoplasm. The enzyme catalyses (2R)-3-phosphoglycerate + ATP = (2R)-3-phospho-glyceroyl phosphate + ADP. Its pathway is carbohydrate degradation; glycolysis; pyruvate from D-glyceraldehyde 3-phosphate: step 2/5. Functionally, essential for sperm motility and male fertility but is not required for the completion of spermatogenesis. In Mus musculus (Mouse), this protein is Phosphoglycerate kinase 2 (Pgk2).